Here is a 364-residue protein sequence, read N- to C-terminus: Eukaryotic translation initiation factor 3 subunit H (364 aa).

Positions 13 to 162 (VQVDALVAIK…LRAYRLSPSF (150 aa)) constitute an MPN domain.

Belongs to the eIF-3 subunit H family. As to quaternary structure, component of the eukaryotic translation initiation factor 3 (eIF-3) complex.

It localises to the cytoplasm. In terms of biological role, component of the eukaryotic translation initiation factor 3 (eIF-3) complex, which is involved in protein synthesis of a specialized repertoire of mRNAs and, together with other initiation factors, stimulates binding of mRNA and methionyl-tRNAi to the 40S ribosome. The eIF-3 complex specifically targets and initiates translation of a subset of mRNAs involved in cell proliferation. This Phaeosphaeria nodorum (strain SN15 / ATCC MYA-4574 / FGSC 10173) (Glume blotch fungus) protein is Eukaryotic translation initiation factor 3 subunit H.